The following is a 274-amino-acid chain: MAIHLYKTSTPSTRNGAVDSKVKSNPRNNLIYGQHHCGKGRNARGIITAGHRGGGHKRLYRKIDFRRNEKDIYGRIVTIEYDPNRNAYICLIHYRDGEKRYILHPRGAIIGDTIVSGTEVPIKMGNALPLTDMPLGTAIHNIEITLGKGGQLARAAGAVAKLIAKEGKSATLKLPSGEVRLISKNCSATVGQVGNVGVNQKSLGRAGSKRWLGKRPVVRGVVMNPVDHPHGGGEGRAPIGRKQPTTPWGYPALGKRSRKRNKYSDNLILRRRSK.

2 disordered regions span residues 1-23 (MAIHLYKTSTPSTRNGAVDSKVK) and 224-274 (NPVD…RRSK).

It belongs to the universal ribosomal protein uL2 family. As to quaternary structure, part of the 50S ribosomal subunit.

The protein localises to the plastid. Its subcellular location is the chloroplast. This Lactuca sativa (Garden lettuce) protein is Large ribosomal subunit protein uL2cz/uL2cy (rpl2-A).